The chain runs to 452 residues: GTPase Der (452 aa).

2 consecutive EngA-type G domains span residues 4 to 169 (PIVA…PPPE) and 177 to 352 (IKVA…EEHR). Residues 10–17 (GRPNVGKS), 57–61 (DTGGL), 120–123 (NKCE), 183–190 (GRPNVGKS), 230–234 (DTAGI), and 295–298 (NKWD) each bind GTP. Residues 353 to 438 (RRVTTAVINE…PIRLLWRGKK (86 aa)) enclose the KH-like domain.

The protein belongs to the TRAFAC class TrmE-Era-EngA-EngB-Septin-like GTPase superfamily. EngA (Der) GTPase family. In terms of assembly, associates with the 50S ribosomal subunit.

Its function is as follows. GTPase that plays an essential role in the late steps of ribosome biogenesis. The chain is GTPase Der from Rippkaea orientalis (strain PCC 8801 / RF-1) (Cyanothece sp. (strain PCC 8801)).